Here is a 366-residue protein sequence, read N- to C-terminus: tRNA 2-selenouridine synthase (366 aa).

Residues 14-137 enclose the Rhodanese domain; that stretch reads LLENRPLIDV…IRSFLINTIE (124 aa). Cysteine 97 (S-selanylcysteine intermediate) is an active-site residue.

This sequence belongs to the SelU family. In terms of assembly, monomer.

The catalysed reaction is 5-methylaminomethyl-2-thiouridine(34) in tRNA + selenophosphate + (2E)-geranyl diphosphate + H2O + H(+) = 5-methylaminomethyl-2-selenouridine(34) in tRNA + (2E)-thiogeraniol + phosphate + diphosphate. The enzyme catalyses 5-methylaminomethyl-2-thiouridine(34) in tRNA + (2E)-geranyl diphosphate = 5-methylaminomethyl-S-(2E)-geranyl-thiouridine(34) in tRNA + diphosphate. It catalyses the reaction 5-methylaminomethyl-S-(2E)-geranyl-thiouridine(34) in tRNA + selenophosphate + H(+) = 5-methylaminomethyl-2-(Se-phospho)selenouridine(34) in tRNA + (2E)-thiogeraniol. It carries out the reaction 5-methylaminomethyl-2-(Se-phospho)selenouridine(34) in tRNA + H2O = 5-methylaminomethyl-2-selenouridine(34) in tRNA + phosphate. Involved in the post-transcriptional modification of the uridine at the wobble position (U34) of tRNA(Lys), tRNA(Glu) and tRNA(Gln). Catalyzes the conversion of 2-thiouridine (S2U-RNA) to 2-selenouridine (Se2U-RNA). Acts in a two-step process involving geranylation of 2-thiouridine (S2U) to S-geranyl-2-thiouridine (geS2U) and subsequent selenation of the latter derivative to 2-selenouridine (Se2U) in the tRNA chain. The polypeptide is tRNA 2-selenouridine synthase (Shewanella frigidimarina (strain NCIMB 400)).